Here is a 449-residue protein sequence, read N- to C-terminus: UDP-N-acetylmuramate--L-alanine ligase (449 aa).

An ATP-binding site is contributed by 121–127; sequence GAHGKSS.

Belongs to the MurCDEF family.

It is found in the cytoplasm. It catalyses the reaction UDP-N-acetyl-alpha-D-muramate + L-alanine + ATP = UDP-N-acetyl-alpha-D-muramoyl-L-alanine + ADP + phosphate + H(+). The protein operates within cell wall biogenesis; peptidoglycan biosynthesis. Cell wall formation. The protein is UDP-N-acetylmuramate--L-alanine ligase of Helicobacter pylori (strain ATCC 700392 / 26695) (Campylobacter pylori).